A 34-amino-acid polypeptide reads, in one-letter code: Tau-theraphotoxin-Pc1c (34 aa).

Intrachain disulfides connect cysteine 2–cysteine 16, cysteine 9–cysteine 21, and cysteine 15–cysteine 28. The residue at position 34 (phenylalanine 34) is a Phenylalanine amide.

The protein belongs to the neurotoxin 10 (Hwtx-1) family. 62 (Vatx) subfamily. As to expression, expressed by the venom gland.

The protein resides in the secreted. Its function is as follows. Selectively activates mammalian TRPV1, or capsaicin receptor, a non-selective cation channel expressed by sensory neurons of the pain pathway. Is more potent than VaTx1 and VaTx2. Interacts with distinct regions of the channel than capsaicin, since it only acts on the extracellular face of the channel, and capsaicin binds to the cytosolic side. Also activates avian TRPV1, which is insensitive to capsaicin. In mice, elicits pain-related behaviors, such as licking and flinching of the affected limb. The paw of toxin-injected mice shows substantial edema. This is Tau-theraphotoxin-Pc1c from Psalmopoeus cambridgei (Trinidad chevron tarantula).